Reading from the N-terminus, the 135-residue chain is MLSPKRTRFRKQHRGRMKGKSYRGNHISFGRYALQAVEPAWITARQIEAGRRAISRYARRGGKIWVRLFPDKRVTLRPAETRMGSGKGSPEYWVSVVKPGRILYEIGGVSETVARTAMLLAASKMPIRTQFIIEE.

The segment at 1–20 (MLSPKRTRFRKQHRGRMKGK) is disordered.

The protein belongs to the universal ribosomal protein uL16 family. As to quaternary structure, part of the 50S ribosomal subunit.

Its subcellular location is the plastid. It is found in the chloroplast. This is Large ribosomal subunit protein uL16c from Landoltia punctata (Dotted duckmeat).